A 199-amino-acid polypeptide reads, in one-letter code: Type-4 uracil-DNA glycosylase (199 aa).

[4Fe-4S] cluster is bound by residues Cys14 and Cys17. Uracil is bound by residues 41–43 (GEA), Phe55, and Asn81. The pseudo-FCL stretch occupies residues 77–114 (VYITNVLKCRPPNNRDPTPEEVEKCGDYLVRQLEAIRP). Residues Cys85 and Cys101 each coordinate [4Fe-4S] cluster. His163 is a binding site for uracil.

Belongs to the uracil-DNA glycosylase (UDG) superfamily. Type 4 (UDGa) family.

It catalyses the reaction Hydrolyzes single-stranded DNA or mismatched double-stranded DNA and polynucleotides, releasing free uracil.. With respect to regulation, product-inhibited by both uracil and apurinic/apyrimidinic sites. Removes uracil bases that are present in DNA as a result of either deamination of cytosine or misincorporation of dUMP instead of dTMP. Can remove uracil from double-stranded DNA containing either a U/G or U/A base pair as well as from single-stranded DNA. The chain is Type-4 uracil-DNA glycosylase from Archaeoglobus fulgidus (strain ATCC 49558 / DSM 4304 / JCM 9628 / NBRC 100126 / VC-16).